The following is an 89-amino-acid chain: Arminin 7591 (89 aa).

A signal peptide spans methionine 1–serine 18. The propeptide occupies lysine 19–alanine 58. A Leucine amide modification is found at leucine 86.

This sequence belongs to the arminin family. Expressed in entodermal epithelium along the body column.

It localises to the secreted. Its subcellular location is the target cell membrane. In terms of biological role, antimicrobial peptide with a broad-spectrum antimicrobial activity. Keeps its antibacterial activity under a wide range of salt concentrations that mimic physiological conditions of human blood, which is surprising, since Hydra is an obligate freshwater animal with nearly no salt tolerance. Does not affect red blood cells. This chain is Arminin 7591, found in Hydra vulgaris (Hydra).